Consider the following 32-residue polypeptide: Photosystem II reaction center protein T (32 aa).

Residues Ser3–Phe23 form a helical membrane-spanning segment.

It belongs to the PsbT family. As to quaternary structure, PSII is composed of 1 copy each of membrane proteins PsbA, PsbB, PsbC, PsbD, PsbE, PsbF, PsbH, PsbI, PsbJ, PsbK, PsbL, PsbM, PsbT, PsbX, PsbY, PsbZ, Psb30/Ycf12, peripheral proteins PsbO, CyanoQ (PsbQ), PsbU, PsbV and a large number of cofactors. It forms dimeric complexes.

The protein localises to the cellular thylakoid membrane. Found at the monomer-monomer interface of the photosystem II (PS II) dimer, plays a role in assembly and dimerization of PSII. PSII is a light-driven water plastoquinone oxidoreductase, using light energy to abstract electrons from H(2)O, generating a proton gradient subsequently used for ATP formation. This Cyanothece sp. (strain PCC 7425 / ATCC 29141) protein is Photosystem II reaction center protein T.